A 224-amino-acid polypeptide reads, in one-letter code: Cutinase 1 (224 aa).

The signal sequence occupies residues 1 to 16 (MKFLSVLSLAITLAAA). Cys46 and Cys125 are oxidised to a cystine. The active-site Nucleophile is Ser136. Cys187 and Cys194 are oxidised to a cystine. Asp191 is a catalytic residue. Catalysis depends on His204, which acts as the Proton donor/acceptor.

This sequence belongs to the cutinase family. Post-translationally, the 2 disulfide bonds play a critical role in holding the catalytic residues in juxta-position; reduction of the disulfide bridges results in the complete inactivation of the enzyme. The N-terminus is blocked.

Its subcellular location is the secreted. The enzyme catalyses cutin + H2O = cutin monomers.. With respect to regulation, inhibited by diisopropyl fluorophosphate (DFP). Functionally, catalyzes the hydrolysis of complex carboxylic polyesters found in the cell wall of plants. Degrades cutin, a macromolecule that forms the structure of the plant cuticle. Allows pathogenic fungi to penetrate through the cuticular barrier into the host plant during the initial stage of fungal infection. This is Cutinase 1 (CUTA) from Colletotrichum gloeosporioides (Anthracnose fungus).